Here is a 278-residue protein sequence, read N- to C-terminus: Ras-related protein Rab-40B (278 aa).

3 residues coordinate GTP: Ser-23, Gly-26, and Lys-27. Positions 41-49 (SPYGHPAGI) are switch-I. Residue Asp-69 participates in Mg(2+) binding. Residues Gly-72, Asn-126, and Arg-127 each contribute to the GTP site. Residues 72 to 88 (GQGRFCTIFRSYSRGAQ) are switch-II. Residues 175–228 (LLRHGMDRLWRPSKVLSLQELCCRAVVSCTPGHLVDKLPLPVALRSHLKSFSMA) enclose the SOCS box domain. The disordered stretch occupies residues 245 to 278 (ANSSHKRNSFRKVRTIRPPQSPPRNCARNSCKIS). Residues 248–259 (SHKRNSFRKVRT) are compositionally biased toward basic residues. A lipid anchor (S-palmitoyl cysteine) is attached at Cys-270. A lipid anchor (S-geranylgeranyl cysteine) is attached at Cys-275.

Belongs to the small GTPase superfamily. Rab family. As to quaternary structure, component of the cullin-5-RING E3 ubiquitin-protein ligase complex (ECS(RAB40B) complex) composed of CUL5, Elongin BC (ELOB and ELOC), RNF7/RBX2 and RAB40B; RAB40B interaction with ECS complex is GTP-independent. Binds (GTP-bound) LIMA1; interaction promotes LIMA1 subcellular localization in lamellipodia during cell migration. Interacts (GTP-bound) with TKS5/SH3PXD2A (via PX domain); interaction promotes invadopodia-mediated extracellular matrix degradation. The cofactor is Mg(2+).

The protein resides in the cell membrane. The protein localises to the cytoplasm. It is found in the cytosol. Its subcellular location is the cell projection. It localises to the lamellipodium membrane. The protein resides in the ruffle. The catalysed reaction is GTP + H2O = GDP + phosphate + H(+). Its pathway is protein modification; protein ubiquitination. Its activity is regulated as follows. Regulated by guanine nucleotide exchange factors (GEFs) which promote the exchange of bound GDP for free GTP. Regulated by GTPase activating proteins (GAPs) which increase the GTP hydrolysis activity. Inhibited by GDP dissociation inhibitors (GDIs). In terms of biological role, RAB40B small GTPase acts as substrate-recognition components of the ECS(RAB40B) E3 ubiquitin ligase complex which mediates the ubiquitination of target proteins. The Rab40 subfamily belongs to the Rab family that are key regulators of intracellular membrane trafficking, from the formation of transport vesicles to their fusion with membranes. Rabs cycle between an inactive GDP-bound form and an active GTP-bound form that is able to recruit to membranes different sets of downstream effectors directly responsible for vesicle formation, movement, tethering and fusion. As part of the ECS(RAB40B) complex, GTP-bound RAB40B promotes LIMA1/EPLIN ubiquitination and degradation, thereby regulating leading-edge actin dynamics during cell migration. As part of the ECS(RAB40B) complex, GTP-bound RAB40B also ubiquitinates RAP2A GTPase which promotes its localization to lamellipodia and activation to drive cell migration. The ECS(RAB40B) complex does not mediate canonical ubiquitin-dependent degradation of RAP2. RAB40B also binds TKS5/SH3PXD2A effector independently from ECS complex to promote invadopodia-mediated extracellular matrix degradation. In Mus musculus (Mouse), this protein is Ras-related protein Rab-40B.